We begin with the raw amino-acid sequence, 505 residues long: T-cell activation GTPase-activating protein 1 (505 aa).

Disordered regions lie at residues 81-147, 160-212, 242-293, 311-339, and 414-441; these read DDSL…SESS, QQDR…DPFT, QGHI…QREI, RTSSIGSEKSKDFSRDQLQKDLRKESQLS, and KPSTAVPPVPSHHGGDLSEGTPGGHRLS. Positions 90–102 are enriched in polar residues; sequence SDVSTLQNDSAYD. The span at 203–212 shows a compositional bias: acidic residues; it reads EGDEAEDPFT. Over residues 250-262 the composition is skewed to low complexity; sequence SRSSPGESLGSSP. Composition is skewed to basic and acidic residues over residues 283-292 and 318-336; these read KTDKTKPQRE and EKSKDFSRDQLQKDLRKES.

This chain is T-cell activation GTPase-activating protein 1 (Tagap1), found in Mus musculus (Mouse).